We begin with the raw amino-acid sequence, 551 residues long: uncharacterized protein (551 aa).

Disordered regions lie at residues Gly66 to Leu111, Pro130 to Asn165, Ala180 to Leu229, and Ala277 to Ser303. Ser74 is subject to Phosphoserine. 2 stretches are compositionally biased toward polar residues: residues Gly92–Leu111 and Val143–Glu156. The span at Asn182 to Ser193 shows a compositional bias: low complexity. Positions Lys204 to Leu226 are enriched in polar residues. The segment covering Thr290–Ser299 has biased composition (low complexity).

This is an uncharacterized protein from Schizosaccharomyces pombe (strain 972 / ATCC 24843) (Fission yeast).